The chain runs to 468 residues: Ribulose bisphosphate carboxylase large chain (468 aa).

Lysine 5 is modified (N6,N6,N6-trimethyllysine). Asparagine 114 and threonine 164 together coordinate substrate. The Proton acceptor role is filled by lysine 166. Lysine 168 serves as a coordination point for substrate. Lysine 192, aspartate 194, and glutamate 195 together coordinate Mg(2+). Lysine 192 bears the N6-carboxylysine mark. Histidine 285 serves as the catalytic Proton acceptor. Substrate is bound by residues arginine 286, histidine 318, and serine 370.

Belongs to the RuBisCO large chain family. Type I subfamily. In terms of assembly, heterohexadecamer of 8 large chains and 8 small chains; disulfide-linked. The disulfide link is formed within the large subunit homodimers. Requires Mg(2+) as cofactor. The disulfide bond which can form in the large chain dimeric partners within the hexadecamer appears to be associated with oxidative stress and protein turnover.

It is found in the plastid. It localises to the chloroplast. It carries out the reaction 2 (2R)-3-phosphoglycerate + 2 H(+) = D-ribulose 1,5-bisphosphate + CO2 + H2O. It catalyses the reaction D-ribulose 1,5-bisphosphate + O2 = 2-phosphoglycolate + (2R)-3-phosphoglycerate + 2 H(+). RuBisCO catalyzes two reactions: the carboxylation of D-ribulose 1,5-bisphosphate, the primary event in carbon dioxide fixation, as well as the oxidative fragmentation of the pentose substrate in the photorespiration process. Both reactions occur simultaneously and in competition at the same active site. This chain is Ribulose bisphosphate carboxylase large chain, found in Salvia divinorum (Maria pastora).